The sequence spans 358 residues: Peptide chain release factor 1 (358 aa).

Q233 carries the post-translational modification N5-methylglutamine.

Belongs to the prokaryotic/mitochondrial release factor family. Post-translationally, methylated by PrmC. Methylation increases the termination efficiency of RF1.

The protein resides in the cytoplasm. Functionally, peptide chain release factor 1 directs the termination of translation in response to the peptide chain termination codons UAG and UAA. The protein is Peptide chain release factor 1 of Clostridium botulinum (strain ATCC 19397 / Type A).